Here is a 373-residue protein sequence, read N- to C-terminus: MASGGALSPVEEKPTVVKTTKAEQHEEEAAVAVKSAAEMMKKSSPCCPRCNSIKTKFCYYNNYSMAQPRYFCRECRRYWTQGGSLRNVPVGGGCRKSKRSSASSASASAASPPAPAVGAAPPVVPALSSAISKLLQSEPMAAPCADFPNVLPTFVSTGFELPAAAGDRLSLGSFGAFGNLSAAVAAPGGGGGSSTTTSFMDMLRGVGGLFDGVGNSHQMGGNGGGGGSYYAPLITGAGNGMLMPPPPLPPFSGSLMQHGMQGLFANHAMGGGGGGVMNAGEDGSVMAGLGGGQWPPALGGADEQQGGGDGGEAVMTKDTGGGASSSASRPDYFYGWNSAAGGVVAGGGIGGNAAAATGATPWQGLIDSSSAMM.

The tract at residues 1 to 23 is disordered; the sequence is MASGGALSPVEEKPTVVKTTKAE. Residues 10 to 23 show a composition bias toward basic and acidic residues; it reads VEEKPTVVKTTKAE. Residues 45–99 form a Dof-type zinc finger; sequence PCCPRCNSIKTKFCYYNNYSMAQPRYFCRECRRYWTQGGSLRNVPVGGGCRKSKR. 4 residues coordinate Zn(2+): C47, C50, C72, and C75. Positions 297–327 are disordered; sequence ALGGADEQQGGGDGGEAVMTKDTGGGASSSA.

As to quaternary structure, interacts with RISBZ1/BZIP58.

It localises to the nucleus. In terms of biological role, transcriptional activator that binds specifically to the DNA consensus core sequence 5'-AAAG-3' also known as prolamin box. Can activate the expression of genes encoding for the seed storage proteins glutelin, prolamin and globulin. Functions synergistically with RISBZ/BZIP58 to positively regulate quantitatively many seed storage proteins. Functions synergistically with RISBZ1/BZIP58 to positively regulate some metabolic enzymes, such as alanine aminotransferase and pyruvate phosphate dikinase, that are expressed in developing seeds. Functions synergistically with RISBZ1/BZIP58 to positively regulate genes that are key players in the development of aleurone layers. Functions synergistically with RISBZ1/BZIP58 to positively regulate the glutelin GLUD-1 gene in endosperm of developing seeds. Can activate the expression of the bifunctional lysine-degrading enzyme, lysine ketoglutarate reductase/saccharopine dehydrogenase (LKR/SDH), one of the key regulators determining free lysine content in plants. In germinating seeds, involved in the gibberellin-mediated activation of the alpha-amylase AMY1.1/AMY1A gene. In Oryza sativa subsp. japonica (Rice), this protein is Dof zinc finger protein 3.